Here is a 720-residue protein sequence, read N- to C-terminus: Calcium/calmodulin-dependent protein kinase type II (720 aa).

One can recognise a Protein kinase domain in the interval 12–269 (YDVKEELGKG…ADQALKVPWI (258 aa)). Residues 18–26 (LGKGAFSVV) and K41 contribute to the ATP site. The active-site Proton acceptor is the D134. Phosphothreonine; by autocatalysis is present on T284. Disordered regions lie at residues 317–345 (SDSTGSVASNGSTTHDASQVAGTSSQPTS) and 504–586 (DNLS…NLSA). 2 stretches are compositionally biased toward polar residues: residues 504–514 (DNLSASTSSDL) and 526–540 (PPSTIKESSESSQTI). A compositionally biased stretch (low complexity) spans 569 to 586 (SSSNSSTASKSSSTNLSA).

The protein belongs to the protein kinase superfamily. CAMK Ser/Thr protein kinase family. CaMK subfamily. Dodecamer. Subunits are tightly packed around a central ring-shaped scaffold with extensive contacts between the regulatory segment of one kinase and the catalytic domain of another enabling cooperative activation of a subunit by the adjacent molecule. Interacts with and phosphorylates daf-16; the interaction promotes daf-16 nuclear localization. Interacts with egl-2 and tir-1. Interacts with nsy-1. Requires Mg(2+) as cofactor. In terms of tissue distribution, expressed in the nervous system. Observed in the ADF and AWC neurons. Position in AWC neurons is regulated by microtubules. Localized to clusters in ventral cord neurites which appear to be required for glr-1 trafficking. Also present in oocytes.

The protein localises to the cytoplasm. Its subcellular location is the cell projection. It is found in the axon. The protein resides in the perikaryon. The enzyme catalyses L-seryl-[protein] + ATP = O-phospho-L-seryl-[protein] + ADP + H(+). The catalysed reaction is L-threonyl-[protein] + ATP = O-phospho-L-threonyl-[protein] + ADP + H(+). Ca2(+)/calmodulin binding removes an autoinhibitory regulatory segment located C-terminal to the kinase domain. This releases the catalytic activity of the enzyme and makes accessible a regulatory residue Thr-284. Phosphorylation of Thr-284 by another kinase domain within the oligomeric holoenzyme keeps CaMKII active in the absence of Ca(2+)/calmodulin by preventing the rebinding of the regulatory segment to the kinase domain and by increasing the affinity of calmodulin for the enzyme. Can respond to high-frequency Ca(2+) pulses to become Ca(2+) independent. In terms of biological role, acts in the signaling of a variety of pathways and processes. Phosphorylates 'Ser-319' of daf-16 in response to stress signals, such as heat, starvation and oxidation, which plays a role in prolonging lifespan. Required for viability under chronic osmotic stress in which it acts downstream of osr-1. Has roles in locomotion, oocyte maturation, brood size, egg laying, defecation, meiotic maturation and neuronal cell fate specification. Required for the regulation of synaptic density and neuromuscular junction morphology. Regulates the synaptic trafficking of glr-1. Bidirectional modulator of neurotransmitter release with negative modulatory effects mainly mediated via slo-1 activation. Involved in activation of ADF neurons and increased tph-1 transcription following exposure to pathogenic bacteria which leads to learned olfactory aversion to the bacteria. Implicated in the muscle regulation of spicule protraction. In conjunction with egl-2 has a role in the suppression of mating behavior under food deprivation to encourage foraging. Involved in restricting str-2 expression to only one of the two AWC neurons. May suppress the functional response to an internal pacemaker, perhaps by modulating the activity of the IP3 receptor. In Caenorhabditis elegans, this protein is Calcium/calmodulin-dependent protein kinase type II (unc-43).